The chain runs to 221 residues: Protein lethal(2)k10201 (221 aa).

C2H2-type zinc fingers lie at residues 74–97 and 113–138; these read YSCV…TEQH and FSCF…IITH. A disordered region spans residues 146 to 168; the sequence is FDHSKNRGKQKHQGKSKPNSMEV. Over residues 151-160 the composition is skewed to basic residues; the sequence is NRGKQKHQGK.

Vital for development. The protein is Protein lethal(2)k10201 (l(2)k10201) of Drosophila melanogaster (Fruit fly).